Reading from the N-terminus, the 186-residue chain is MTVADAKKTADQKMQKSIETLKADLAKVRTGRAHTGILDHVMVEYYGNPTNLSQVANVTLIDARTIGVQPFEKKMVAVVEKAIREADLGLNPATQGELIRVPTPPLTEERRKEMVKLVKSEAEDAKIAVRNIRRDANESLKKLVKEKACSEDEERRAQDEIQKLTDKFVIEIDKLVVEKEKEVLTV.

This sequence belongs to the RRF family.

Its subcellular location is the cytoplasm. Responsible for the release of ribosomes from messenger RNA at the termination of protein biosynthesis. May increase the efficiency of translation by recycling ribosomes from one round of translation to another. This is Ribosome-recycling factor from Janthinobacterium sp. (strain Marseille) (Minibacterium massiliensis).